Here is a 64-residue protein sequence, read N- to C-terminus: Large ribosomal subunit protein uL29 (64 aa).

Belongs to the universal ribosomal protein uL29 family.

The protein is Large ribosomal subunit protein uL29 of Cupriavidus necator (strain ATCC 17699 / DSM 428 / KCTC 22496 / NCIMB 10442 / H16 / Stanier 337) (Ralstonia eutropha).